The primary structure comprises 227 residues: Deoxyribose-phosphate aldolase (227 aa).

The Proton donor/acceptor role is filled by Asp-96. Lys-158 serves as the catalytic Schiff-base intermediate with acetaldehyde. The active-site Proton donor/acceptor is Lys-187.

It belongs to the DeoC/FbaB aldolase family. DeoC type 1 subfamily.

It localises to the cytoplasm. The catalysed reaction is 2-deoxy-D-ribose 5-phosphate = D-glyceraldehyde 3-phosphate + acetaldehyde. The protein operates within carbohydrate degradation; 2-deoxy-D-ribose 1-phosphate degradation; D-glyceraldehyde 3-phosphate and acetaldehyde from 2-deoxy-alpha-D-ribose 1-phosphate: step 2/2. Functionally, catalyzes a reversible aldol reaction between acetaldehyde and D-glyceraldehyde 3-phosphate to generate 2-deoxy-D-ribose 5-phosphate. The polypeptide is Deoxyribose-phosphate aldolase (Desulfotalea psychrophila (strain LSv54 / DSM 12343)).